A 405-amino-acid polypeptide reads, in one-letter code: Arginine biosynthesis bifunctional protein ArgJ (405 aa).

Substrate is bound by residues Thr-152, Lys-178, Thr-189, Glu-276, Asn-400, and Thr-405. The active-site Nucleophile is Thr-189.

This sequence belongs to the ArgJ family. As to quaternary structure, heterotetramer of two alpha and two beta chains.

It localises to the cytoplasm. It carries out the reaction N(2)-acetyl-L-ornithine + L-glutamate = N-acetyl-L-glutamate + L-ornithine. It catalyses the reaction L-glutamate + acetyl-CoA = N-acetyl-L-glutamate + CoA + H(+). It functions in the pathway amino-acid biosynthesis; L-arginine biosynthesis; L-ornithine and N-acetyl-L-glutamate from L-glutamate and N(2)-acetyl-L-ornithine (cyclic): step 1/1. It participates in amino-acid biosynthesis; L-arginine biosynthesis; N(2)-acetyl-L-ornithine from L-glutamate: step 1/4. Catalyzes two activities which are involved in the cyclic version of arginine biosynthesis: the synthesis of N-acetylglutamate from glutamate and acetyl-CoA as the acetyl donor, and of ornithine by transacetylation between N(2)-acetylornithine and glutamate. The protein is Arginine biosynthesis bifunctional protein ArgJ of Pseudomonas fluorescens (strain ATCC BAA-477 / NRRL B-23932 / Pf-5).